The chain runs to 97 residues: Early nodulin-75 (97 aa).

Positions 1-97 (RPHVHPPPEH…PEYQPPHEKP (97 aa)) are disordered. Composition is skewed to pro residues over residues 9–22 (EHQP…PEYQ) and 31–43 (VHPP…PYQK). Over residues 76-97 (PPHEKPPHEHPPPEYQPPHEKP) the composition is skewed to basic and acidic residues.

This sequence belongs to the nodulin 75 family.

Its function is as follows. Involved in early stages of root nodule development. The chain is Early nodulin-75 (ENOD2) from Medicago sativa (Alfalfa).